The sequence spans 123 residues: Small ribosomal subunit protein uS12cz/uS12cy (123 aa).

It belongs to the universal ribosomal protein uS12 family. Part of the 30S ribosomal subunit.

Its subcellular location is the plastid. It localises to the chloroplast. In terms of biological role, with S4 and S5 plays an important role in translational accuracy. Located at the interface of the 30S and 50S subunits. The protein is Small ribosomal subunit protein uS12cz/uS12cy (rps12-A) of Nymphaea alba (White water-lily).